The chain runs to 907 residues: Valine--tRNA ligase (907 aa).

The 'HIGH' region signature appears at Pro-45–His-55. The 'KMSKS' region motif lies at Lys-554–Ser-558. An ATP-binding site is contributed by Lys-557. Residues Gly-838–Asn-870 are a coiled coil.

Belongs to the class-I aminoacyl-tRNA synthetase family. ValS type 1 subfamily. In terms of assembly, monomer.

It is found in the cytoplasm. The enzyme catalyses tRNA(Val) + L-valine + ATP = L-valyl-tRNA(Val) + AMP + diphosphate. Functionally, catalyzes the attachment of valine to tRNA(Val). As ValRS can inadvertently accommodate and process structurally similar amino acids such as threonine, to avoid such errors, it has a 'posttransfer' editing activity that hydrolyzes mischarged Thr-tRNA(Val) in a tRNA-dependent manner. The protein is Valine--tRNA ligase of Bartonella henselae (strain ATCC 49882 / DSM 28221 / CCUG 30454 / Houston 1) (Rochalimaea henselae).